A 616-amino-acid polypeptide reads, in one-letter code: Probable galacturonosyltransferase 4 (616 aa).

Residues 1-6 lie on the Cytoplasmic side of the membrane; the sequence is MMVKLR. A helical; Signal-anchor for type II membrane protein transmembrane segment spans residues 7–29; that stretch reads NLVLFFMLLTVVAHILLYTDPAA. The Lumenal portion of the chain corresponds to 30-616; that stretch reads SFKTPFSKRD…VYLRECNINP (587 aa). The segment at 132 to 152 is disordered; that stretch reads QTSEKVDEQPEPNAFGAKKDT. N-linked (GlcNAc...) asparagine glycans are attached at residues Asn-291, Asn-326, Asn-378, Asn-481, and Asn-514.

It belongs to the glycosyltransferase 8 family. In terms of tissue distribution, expressed in roots, inflorescences, siliques, leaves and stems.

The protein localises to the golgi apparatus membrane. It participates in glycan metabolism; pectin biosynthesis. May be involved in pectin and/or xylans biosynthesis in cell walls. This Arabidopsis thaliana (Mouse-ear cress) protein is Probable galacturonosyltransferase 4 (GAUT4).